Consider the following 325-residue polypeptide: D-alanine--D-alanine ligase (325 aa).

The region spanning 107 to 311 (KRLLLSESLP…YEALCVEVLK (205 aa)) is the ATP-grasp domain. 137 to 192 (VDTLGLPLIVKPAREGSSLGLSKVTERAAMAAAVALAEKMDADILCEQFISGDEVT) is an ATP binding site. Mg(2+) contacts are provided by aspartate 264, glutamate 278, and asparagine 280.

The protein belongs to the D-alanine--D-alanine ligase family. Mg(2+) serves as cofactor. Mn(2+) is required as a cofactor.

The protein resides in the cytoplasm. The enzyme catalyses 2 D-alanine + ATP = D-alanyl-D-alanine + ADP + phosphate + H(+). The protein operates within cell wall biogenesis; peptidoglycan biosynthesis. Cell wall formation. This is D-alanine--D-alanine ligase from Polaromonas naphthalenivorans (strain CJ2).